A 225-amino-acid chain; its full sequence is Chlorosome protein J (225 aa).

A 2Fe-2S ferredoxin-type domain is found at 1 to 95 (MIIYINDKPC…TIRVLTRAEK (95 aa)). Residues C33, C39, C42, and C77 each coordinate [2Fe-2S] cluster.

[2Fe-2S] cluster serves as cofactor.

The protein resides in the chlorosome. Could play a direct role in the oxidation or reduction of the quenching species formed in the chlorosome. The chain is Chlorosome protein J (csmJ) from Chlorobaculum tepidum (strain ATCC 49652 / DSM 12025 / NBRC 103806 / TLS) (Chlorobium tepidum).